Reading from the N-terminus, the 468-residue chain is Asparagine--tRNA ligase (468 aa).

The protein belongs to the class-II aminoacyl-tRNA synthetase family. In terms of assembly, homodimer.

Its subcellular location is the cytoplasm. It carries out the reaction tRNA(Asn) + L-asparagine + ATP = L-asparaginyl-tRNA(Asn) + AMP + diphosphate + H(+). This Parabacteroides distasonis (strain ATCC 8503 / DSM 20701 / CIP 104284 / JCM 5825 / NCTC 11152) protein is Asparagine--tRNA ligase.